Consider the following 390-residue polypeptide: GTPase Obg (390 aa).

The Obg domain maps to methionine 1–leucine 159. Positions asparagine 127–glycine 147 are disordered. Positions arginine 129–threonine 145 are enriched in polar residues. Positions alanine 160–isoleucine 333 constitute an OBG-type G domain. Residues glycine 166 to serine 173, phenylalanine 191 to valine 195, aspartate 213 to glycine 216, asparagine 283 to aspartate 286, and serine 314 to alanine 316 each bind GTP. Residues serine 173 and threonine 193 each coordinate Mg(2+).

Belongs to the TRAFAC class OBG-HflX-like GTPase superfamily. OBG GTPase family. Monomer. Requires Mg(2+) as cofactor.

The protein resides in the cytoplasm. Functionally, an essential GTPase which binds GTP, GDP and possibly (p)ppGpp with moderate affinity, with high nucleotide exchange rates and a fairly low GTP hydrolysis rate. Plays a role in control of the cell cycle, stress response, ribosome biogenesis and in those bacteria that undergo differentiation, in morphogenesis control. In Escherichia coli (strain K12 / DH10B), this protein is GTPase Obg.